Here is a 568-residue protein sequence, read N- to C-terminus: Periplasmic trehalase (568 aa).

Positions 1-38 are cleaved as a signal peptide; the sequence is MPHAPARSGDAMSAAAPPCCTSLLGLSLSMFVAPCALA. Substrate-binding positions include Arg169, 176 to 177, Asn213, 222 to 224, 294 to 296, and Gly327; these read WD, RSQ, and RPE. Active-site proton donor/acceptor residues include Asp329 and Glu511. Glu526 contributes to the substrate binding site.

Belongs to the glycosyl hydrolase 37 family.

Its subcellular location is the periplasm. The enzyme catalyses alpha,alpha-trehalose + H2O = alpha-D-glucose + beta-D-glucose. Its function is as follows. Provides the cells with the ability to utilize trehalose at high osmolarity by splitting it into glucose molecules that can subsequently be taken up by the phosphotransferase-mediated uptake system. In Xanthomonas campestris pv. campestris (strain 8004), this protein is Periplasmic trehalase.